A 235-amino-acid polypeptide reads, in one-letter code: U1 small nuclear ribonucleoprotein C (235 aa).

Residues 4–36 form a Matrin-type zinc finger; that stretch reads YYCEYCDIYLTHSSPVGRRQHIHGRKHISAKIE. The interval 131–235 is disordered; sequence QAHNNYSYPN…SKEHIESDIS (105 aa). Residues 134–168 are compositionally biased toward low complexity; that stretch reads NNYSYPNSINPSNQINYSNNYGSNNFNNSNEFNKN. Basic and acidic residues predominate over residues 169–189; sequence MNEKDNINNNDIHDNKVKTDE. The segment covering 192–203 has biased composition (low complexity); sequence PINNDNLNNTRN. 2 stretches are compositionally biased toward basic and acidic residues: residues 205–217 and 225–235; these read SYEE…DHKK and NSKEHIESDIS.

The protein belongs to the U1 small nuclear ribonucleoprotein C family. U1 snRNP is composed of the 7 core Sm proteins B/B', D1, D2, D3, E, F and G that assemble in a heptameric protein ring on the Sm site of the small nuclear RNA to form the core snRNP, and at least 3 U1 snRNP-specific proteins U1-70K, U1-A and U1-C. U1-C interacts with U1 snRNA and the 5' splice-site region of the pre-mRNA.

The protein localises to the nucleus. In terms of biological role, component of the spliceosomal U1 snRNP, which is essential for recognition of the pre-mRNA 5' splice-site and the subsequent assembly of the spliceosome. U1-C is directly involved in initial 5' splice-site recognition for both constitutive and regulated alternative splicing. The interaction with the 5' splice-site seems to precede base-pairing between the pre-mRNA and the U1 snRNA. Stimulates commitment or early (E) complex formation by stabilizing the base pairing of the 5' end of the U1 snRNA and the 5' splice-site region. The sequence is that of U1 small nuclear ribonucleoprotein C from Plasmodium falciparum (isolate 3D7).